A 184-amino-acid chain; its full sequence is MSNSKPLSLTDAVTTWYMKKLKSKPIQTKALTSATLSFISSVVAQKFIEKKKINWNAVVKFTVWGLISSPLVHYWHIILDRLFKNIKDKYQSWGKLIVDQLVFAPFINIAFYSVLAILDGKPKSILFKLYFDLFPTLKASWKVWPLAQLINFRFVPSHLRVLFGNLVGFCWGIYLSILATKKRN.

A signal peptide spans M1–A44. The next 3 membrane-spanning stretches (helical) occupy residues V58–I78, I97–I117, and L159–A179.

Belongs to the peroxisomal membrane protein PXMP2/4 family.

It localises to the membrane. This is PXMP2/4 family protein 3 from Dictyostelium discoideum (Social amoeba).